Reading from the N-terminus, the 148-residue chain is Transcriptional repressor NrdR (148 aa).

A zinc finger lies at 3 to 34 (CPFCHNEDTQVLDTRVSDEGDTIRRRRRCAKC). The ATP-cone domain occupies 49–139 (PAIVKKNGSR…VYRSFADIES (91 aa)).

It belongs to the NrdR family. It depends on Zn(2+) as a cofactor.

Its function is as follows. Negatively regulates transcription of bacterial ribonucleotide reductase nrd genes and operons by binding to NrdR-boxes. In Polynucleobacter necessarius subsp. necessarius (strain STIR1), this protein is Transcriptional repressor NrdR.